The primary structure comprises 323 residues: Flavone synthase cfoJ (323 aa).

The cofactor is FMN.

It participates in secondary metabolite biosynthesis; flavonoid biosynthesis. FMN-dependent oxidoreductase; part of the gene cluster that mediates the biosynthesis of chlorflavonin, a fungal flavonoid with acetolactate synthase inhibitory activity. Within the pathway, cfoJ acts as a flavone synthase (FNS) and catalyzes the formation of a double bond between C2 and C3, converting the flavanone into a flavone. The pathway begins with the PKS-NRPS hybrid synthetase cfoA that uses benzoic acid or p-hydroxybenzoic acid as a starter unit with four rounds of chain elongation using malonyl-CoA to form the chalcone skeleton. Then, a new type of chalcone isomerase, cfoK, catalyzes the conversion of the chalcone into a flavanone by a histidine-mediated oxa-Michael addition mechanism. The desaturation of flavanone to flavone is catalyzed by a new type of flavone synthase, the flavin mononucleotide (FMN)-dependent oxidoreductase cfoJ. Monooxygenases cfoF, cfoG, and P450 cfoH are responsible for the hydroxylation of the flavonoid skeleton at sites C3, C8, and C2', respectively. Like cfoF, the dehydratase cfoI plays also a role in the hydroxylation of position C3. Methyltransferases cfoB, cfoC, and cfoD then catalyze the methylation of C7-OH, C8-OH, and C3-OH, respectively. Finally, the monooxygenase cfoE is responsible for the chlorination of flavonoid at position C3'. The sequence is that of Flavone synthase cfoJ from Aspergillus candidus.